The sequence spans 133 residues: MKKPPSSPAACPCGKPRAYPDCCGRWHAGALFLQAPDAESLMRSRYSAFVLDQLDYLLQTWHPDTRPSELEPNAADVKWLGLQIKASQQQDDTHATVEFVARLRQAGRATRLHELSRFVKEEQRWYYVDGDIR.

Belongs to the UPF0225 family.

In Bordetella parapertussis (strain 12822 / ATCC BAA-587 / NCTC 13253), this protein is UPF0225 protein BPP1723.